A 100-amino-acid chain; its full sequence is Small ribosomal subunit protein bS20 (100 aa).

The span at 1 to 20 (MASGKPKKKNPRLASGRKRV) shows a compositional bias: basic residues. Residues 1-21 (MASGKPKKKNPRLASGRKRVR) are disordered.

It belongs to the bacterial ribosomal protein bS20 family.

In terms of biological role, binds directly to 16S ribosomal RNA. This Albidiferax ferrireducens (strain ATCC BAA-621 / DSM 15236 / T118) (Rhodoferax ferrireducens) protein is Small ribosomal subunit protein bS20.